The chain runs to 1342 residues: Receptor tyrosine-protein kinase erbB-3 (1342 aa).

A signal peptide spans 1 to 19; that stretch reads MRANDALQVLGLLFSLARG. At 20 to 643 the chain is on the extracellular side; that stretch reads SEVGNSQAVC…LVLIGKTHLT (624 aa). An intrachain disulfide couples C29 to C56. N126 carries an N-linked (GlcNAc...) asparagine glycan. Intrachain disulfides connect C156–C183, C186–C194, C190–C202, C210–C218, C214–C226, C227–C235, C231–C243, C246–C255, C259–C286, C290–C301, C305–C320, and C323–C327. Residue N250 is glycosylated (N-linked (GlcNAc...) asparagine). N353, N408, N414, N437, and N469 each carry an N-linked (GlcNAc...) asparagine glycan. 10 cysteine pairs are disulfide-bonded: C500–C509, C504–C517, C520–C529, C533–C549, C552–C565, C556–C573, C576–C585, C589–C610, C613–C621, and C617–C629. N522 carries N-linked (GlcNAc...) asparagine glycosylation. N-linked (GlcNAc...) asparagine glycosylation occurs at N566. Residue N616 is glycosylated (N-linked (GlcNAc...) asparagine). A helical membrane pass occupies residues 644-664; it reads MALTVIAGLVVIFMMLGGTFL. Topologically, residues 665-1342 are cytoplasmic; the sequence is YWRGRRIQNK…LFPKANAQRT (678 aa). A Phosphoserine modification is found at S686. A Protein kinase domain is found at 709–966; that stretch reads LRKLKVLGSG…TFKELANEFT (258 aa). Residues 715-723, K742, 788-790, and 834-839 each bind ATP; these read LGSGVFGTV, QYL, and NLAARN. Catalysis depends on N834, which acts as the Proton acceptor. Disordered regions lie at residues 980-999 and 1033-1152; these read RESG…TNKK and LPVG…PGLE. The residue at position 982 (S982) is a Phosphoserine. Residues 1042–1075 show a composition bias toward polar residues; that stretch reads RGSQSLLSPSSGYMPMNQGNLGESCQESAVSGSS.

It belongs to the protein kinase superfamily. Tyr protein kinase family. EGF receptor subfamily. As to quaternary structure, monomer and homodimer. Heterodimer with each of the other ERBB receptors (Potential). Interacts with CSPG5. Interacts with GRB7. Interacts with MUC1. Interacts with MYOC. Interacts with isoform 2 of PA2G4. Found in a ternary complex with NRG1 and ITGAV:ITGB3 or ITGA6:ITGB4. Autophosphorylated. Ligand-binding increases phosphorylation on tyrosine residues and promotes its association with the p85 subunit of phosphatidylinositol 3-kinase. As to expression, epithelial tissues and brain.

It is found in the cell membrane. Its subcellular location is the secreted. The catalysed reaction is L-tyrosyl-[protein] + ATP = O-phospho-L-tyrosyl-[protein] + ADP + H(+). In terms of biological role, tyrosine-protein kinase that plays an essential role as cell surface receptor for neuregulins. Binds to neuregulin-1 (NRG1) and is activated by it; ligand-binding increases phosphorylation on tyrosine residues and promotes its association with the p85 subunit of phosphatidylinositol 3-kinase. May also be activated by CSPG5. Involved in the regulation of myeloid cell differentiation. This chain is Receptor tyrosine-protein kinase erbB-3 (ERBB3), found in Homo sapiens (Human).